Here is a 249-residue protein sequence, read N- to C-terminus: Vesicle-associated membrane protein-associated protein A (249 aa).

A2 is modified (N-acetylalanine). Residues A2–P227 lie on the Cytoplasmic side of the membrane. Positions I14 to E131 constitute an MSP domain. Residues K50–T53 form a phosphorylated FFAT motif binding region. N6-acetyllysine is present on K125. Positions E135–P144 are enriched in basic and acidic residues. Residues E135 to S166 form a disordered region. Residue S166 is modified to Phosphoserine. A coiled-coil region spans residues N168–A207. T170 is subject to Phosphothreonine. Phosphoserine occurs at positions 214, 216, and 219. The chain crosses the membrane as a helical; Anchor for type IV membrane protein span at residues L228–I248.

Belongs to the VAMP-associated protein (VAP) (TC 9.B.17) family. Homodimer; disulfide-linked. Heterodimer with VAPB. Interacts with VAMP1, VAMP2, STX1A, BET1, SEC22C and with the C-terminal domain of OCLN. Interacts (via MSP domain) with OSBPL1A (via FFAT motif). Interacts (via MSP domain) with ZFYVE27; may retain ZFYVE27 in the endoplasmic reticulum and regulate its function in cell projections formation. Interacts with OSBP. Interacts (via C-terminus) with RSAD2/viperin (via C-terminus). Interacts with IFITM3. Interacts with OSBPL3 (phosphorylated form). Interacts with KIF5A in a ZFYVE27-dependent manner. Interacts (via MSP domain) with STARD3 (via phosphorylated FFAT motif); this interaction recruits VAPA to the endosome. Interacts with STARD3NL (via FFAT motif). Interacts with CERT1. Interacts with PLEKHA3 and SACM1L to form a ternary complex. Interacts with VPS13A (via FFAT motif). Interacts with RB1CC1 (via phosphorylated FFAT motif), MIGA2 (via phosphorylated FFAT motif), RMDN3 (via phosphorylated FFAT motif), KCNB1 (via phosphorylated FFAT motif) and KCNB2 (via phosphorylated FFAT motif). Interacts (via MSP domain) with WDR44; the interactions connect the endoplasmic reticulum (ER) with the endosomal tubule. Ubiquitous.

The protein resides in the endoplasmic reticulum membrane. It is found in the cell membrane. The protein localises to the cell junction. Its subcellular location is the tight junction. It localises to the nucleus membrane. Its function is as follows. Endoplasmic reticulum (ER)-anchored protein that mediates the formation of contact sites between the ER and endosomes via interaction with FFAT motif-containing proteins such as STARD3 or WDR44. STARD3-VAPA interaction enables cholesterol transfer from the ER to endosomes. Via interaction with WDR44 participates in neosynthesized protein export. In addition, recruited to the plasma membrane through OSBPL3 binding. The OSBPL3-VAPA complex stimulates RRAS signaling which in turn attenuates integrin beta-1 (ITGB1) activation at the cell surface. With OSBPL3, may regulate ER morphology. May play a role in vesicle trafficking. This is Vesicle-associated membrane protein-associated protein A from Rattus norvegicus (Rat).